Reading from the N-terminus, the 753-residue chain is MSAADLDYFSEDEQREIEAELDTGFKDIEEKYAVTAQKGFETMLVVDNIPIVDGSKKQRLLERLRQTFAKVGAPIEEESIDMPWNAAAGTNKGFVFLTYPDVKEAENAVHTLDGVSFGKNVLHVNRFGDIQRFASMPVGEGDLPSGWKEKEYIEKDYLRNWLGDIAGRDQYVTFWETEVTVWWNGRNGTAEALKGPDGKPVKNSKWGELYLQWSTMGTYLASLHRVGVALWSGPKLDGPIGVNVLRFTHPNVRLIQFSPCENYLVTWSEDPLPNYENHPNAALRDTFGPEDEGNQYVIWDIKTTRVLRTFPGDKSAIGVDDTQSRMSWPTFKWSADDSYIAKCNVGAGISVYELPTMGLLDRKSIKIEGVQDFEWCPMSQKDLIARQEGKGKECVLAFWTPEAQNQPARVNIMAVPSRTILRSKNLFNVSECKFYWQSQGDFLCVKVDRHARKAKSKKATSCNLEIFRMREKDYPVEVLEFKDYVPQFAWEPSGTRFAIVLQAETNLPSVSGASTKYSIDFYQLDSKKGDFIAIKHLDSKMANTLVWSPKGRHIALATIGSSSKYDIEFWDLDFTIDERREAAELGANVTMLGTGEHYGITEIAWDPSGRYIATSASTWRQSPEPGFSIWDFKGQQLLHESRDRFKQFLWRPRPPTLLSKDQIKKVRKELREYSRQFDEEDAAEENRGSAEKLAQRRREIGEWNAWRTRNNDRLAFERENRGKSKAKIDVKGQEARVEEWVEELIDETEELSM.

The RRM domain occupies 42 to 129 (TMLVVDNIPI…NVLHVNRFGD (88 aa)). 5 WD repeats span residues 142–185 (DLPS…WWNG), 203–241 (NSKW…GPIG), 321–362 (DTQS…LLDR), 537–580 (LDSK…DERR), and 595–640 (GEHY…LLHE). Residues 723 to 753 (KSKAKIDVKGQEARVEEWVEELIDETEELSM) adopt a coiled-coil conformation.

Belongs to the eIF-3 subunit B family. Component of the eukaryotic translation initiation factor 3 (eIF-3) complex.

Its subcellular location is the cytoplasm. Its function is as follows. RNA-binding component of the eukaryotic translation initiation factor 3 (eIF-3) complex, which is involved in protein synthesis of a specialized repertoire of mRNAs and, together with other initiation factors, stimulates binding of mRNA and methionyl-tRNAi to the 40S ribosome. The eIF-3 complex specifically targets and initiates translation of a subset of mRNAs involved in cell proliferation. In Cryptococcus neoformans var. neoformans serotype D (strain B-3501A) (Filobasidiella neoformans), this protein is Eukaryotic translation initiation factor 3 subunit B.